The chain runs to 382 residues: Pyrimidine monooxygenase RutA (382 aa).

Residues 68–69, Asn-134, Glu-143, 159–160, and Ser-209 each bind FMN; these read IK and RY.

This sequence belongs to the NtaA/SnaA/DszA monooxygenase family. RutA subfamily.

It catalyses the reaction uracil + FMNH2 + NADH + O2 = (Z)-3-ureidoacrylate + FMN + NAD(+) + H2O + H(+). The catalysed reaction is thymine + FMNH2 + NADH + O2 = (Z)-2-methylureidoacrylate + FMN + NAD(+) + H2O + H(+). Its function is as follows. Catalyzes the pyrimidine ring opening between N-3 and C-4 by an unusual flavin hydroperoxide-catalyzed mechanism, adding oxygen atoms in the process to yield ureidoacrylate peracid, that immediately reacts with FMN forming ureidoacrylate and FMN-N(5)-oxide. The FMN-N(5)-oxide reacts spontaneously with NADH to produce FMN. Requires the flavin reductase RutF to regenerate FMN in vivo. The chain is Pyrimidine monooxygenase RutA from Escherichia coli O81 (strain ED1a).